Consider the following 264-residue polypeptide: Cell division protein FtsQ (264 aa).

Positions 1 to 24 (MAGPTTAERGDRQQESSGPPPARW) are disordered. Topologically, residues 1-31 (MAGPTTAERGDRQQESSGPPPARWSGTRRLR) are cytoplasmic. A helical membrane pass occupies residues 32–52 (ALVVLAALLVLLAGGCAWLLY). Over 53-264 (GSSWLRLERV…VPTAPASSGS (212 aa)) the chain is Extracellular. The POTRA domain occupies 57-126 (LRLERVSVSG…HGIGLKVTER (70 aa)).

The protein belongs to the FtsQ/DivIB family. FtsQ subfamily.

It localises to the cell membrane. Essential cell division protein. The sequence is that of Cell division protein FtsQ from Streptomyces collinus.